Consider the following 96-residue polypeptide: Small ribosomal subunit protein bS6 (96 aa).

Belongs to the bacterial ribosomal protein bS6 family.

In terms of biological role, binds together with bS18 to 16S ribosomal RNA. The polypeptide is Small ribosomal subunit protein bS6 (Gloeobacter violaceus (strain ATCC 29082 / PCC 7421)).